The chain runs to 379 residues: 1-deoxy-D-xylulose 5-phosphate reductoisomerase (379 aa).

Residues T10, G11, S12, I13, N39, and N121 each contribute to the NADPH site. K122 is a 1-deoxy-D-xylulose 5-phosphate binding site. NADPH is bound at residue E123. D147 lines the Mn(2+) pocket. S148, E149, S173, and H196 together coordinate 1-deoxy-D-xylulose 5-phosphate. E149 lines the Mn(2+) pocket. G202 provides a ligand contact to NADPH. 1-deoxy-D-xylulose 5-phosphate contacts are provided by S209, N214, K215, and E218. A Mn(2+)-binding site is contributed by E218.

This sequence belongs to the DXR family. Mg(2+) serves as cofactor. Mn(2+) is required as a cofactor.

The enzyme catalyses 2-C-methyl-D-erythritol 4-phosphate + NADP(+) = 1-deoxy-D-xylulose 5-phosphate + NADPH + H(+). It participates in isoprenoid biosynthesis; isopentenyl diphosphate biosynthesis via DXP pathway; isopentenyl diphosphate from 1-deoxy-D-xylulose 5-phosphate: step 1/6. Catalyzes the NADPH-dependent rearrangement and reduction of 1-deoxy-D-xylulose-5-phosphate (DXP) to 2-C-methyl-D-erythritol 4-phosphate (MEP). The polypeptide is 1-deoxy-D-xylulose 5-phosphate reductoisomerase (Chlamydia pneumoniae (Chlamydophila pneumoniae)).